The following is a 481-amino-acid chain: Beta-amyrin 28-monooxygenase (481 aa).

Residues 4 to 24 (FYVPLLSLFVLFVSLSFYFLF) traverse the membrane as a helical segment. Cysteine 428 provides a ligand contact to heme.

The protein belongs to the cytochrome P450 family. Heme serves as cofactor.

The protein localises to the membrane. The catalysed reaction is beta-amyrin + 3 reduced [NADPH--hemoprotein reductase] + 3 O2 = oleanolate + 3 oxidized [NADPH--hemoprotein reductase] + 4 H2O + 4 H(+). Catalyzes the oxidation of the methyl group to a carboxyl group at the C-28 position of beta-amyrin to form oleanolate. The polypeptide is Beta-amyrin 28-monooxygenase (Kalopanax septemlobus (Castor aralia)).